The primary structure comprises 624 residues: Atypical kinase COQ8B, mitochondrial (624 aa).

The disordered stretch occupies residues Glu90–Lys117. A helical transmembrane segment spans residues Leu189–Ala205. Residues Lys249–Gln252 carry the KxGQ motif motif. The region spanning Met285–Leu517 is the Protein kinase domain. An AAAS motif motif is present at residues Ala310–Ser313. Residues Ser313, Lys331, and Met418 to Val421 contribute to the ATP site. The active-site Proton acceptor is the Asp461. Asn466 and Asp480 together coordinate ATP.

The protein belongs to the protein kinase superfamily. ADCK protein kinase family. In terms of assembly, homodimer; homodimerizes via its transmembrane region. Interacts with the multi-subunit COQ enzyme complex.

It is found in the mitochondrion membrane. It localises to the cytoplasm. Its subcellular location is the cytosol. The protein localises to the cell membrane. It participates in cofactor biosynthesis; ubiquinone biosynthesis. In terms of biological role, atypical kinase involved in the biosynthesis of coenzyme Q, also named ubiquinone, an essential lipid-soluble electron transporter for aerobic cellular respiration. Its substrate specificity is still unclear: may act as a protein kinase that mediates phosphorylation of COQ3. According to other reports, acts as a small molecule kinase, possibly a lipid kinase that phosphorylates a prenyl lipid in the ubiquinone biosynthesis pathway, as suggested by its ability to bind coenzyme Q lipid intermediates. However, the small molecule kinase activity was not confirmed by another publication. Required for podocyte migration. This chain is Atypical kinase COQ8B, mitochondrial, found in Danio rerio (Zebrafish).